Here is a 180-residue protein sequence, read N- to C-terminus: UPF0227 protein YcfP (180 aa).

The protein belongs to the UPF0227 family.

This chain is UPF0227 protein YcfP, found in Escherichia coli O7:K1 (strain IAI39 / ExPEC).